The sequence spans 551 residues: MPSARLQQQFIRLWQCCEGKSQDTTLNELAALLSCSRRHMRTLLNTMQDRGWLTWEAEVGRGKRSRLTFLYTGLALQQQRAEDLLEQDRIDQLVQLVGDKATVRQMLVSHLGRSFRQGRHILRVLYYRPLRNLLPGSALRRSETHIARQIFSSLTRINEENGELEADIAHHWQQISPLHWRFFLRPGVHFHHGRELEMDDVIASLKRINTLPLYSHIADIVSPTPWTLDIHLTQPDRWLPLLLGQVPAMILPREWETLSNFASHPIGTGPYAVIRNTTNQLKIQAFDDFFGYRALIDEVNVWVLPEIADEPAGGLMLKGPQGEEKEIESRLEEGCYYLLFDSRTHRGANQQVRDWVNYVLSPTNLVYFAEEQYQQLWFPAYGLLPRWHHARTIKSEKPAGLESLTLTFYQDHSEHRVIAGIMQQILASHQVTLEIKEISYDQWHEGEIESDIWLNSANFTLPLDFSLFAHLCEVPLLQHCIPIDWQADAARWRNGEMNLANWCQQLVASKAMVPLIHHWLIIQGQRSMRGLRMNTLGWFDFKSAWFAPPDP.

The 116-residue stretch at 1–116 (MPSARLQQQF…LVSHLGRSFR (116 aa)) folds into the HTH marR-type domain. Residues 26–49 (LNELAALLSCSRRHMRTLLNTMQD) constitute a DNA-binding region (H-T-H motif). The segment at 163 to 492 (ELEADIAHHW…IDWQADAARW (330 aa)) is solute-binding.

Its function is as follows. Activates the small RNA gene sgrS under glucose-phosphate stress conditions as well as yfdZ. Represses its own transcription under both stress and non-stress conditions. Might act as a sensor of the intracellular accumulation of phosphoglucose by binding these molecules in its C-terminal solute-binding domain. The sequence is that of HTH-type transcriptional regulator SgrR from Shigella boydii serotype 4 (strain Sb227).